A 480-amino-acid chain; its full sequence is Histone-lysine N-methyltransferase ASHR1 (480 aa).

An SET domain is found at 11–248 (RCLGVSNLPQ…KDSEITISYI (238 aa)). Cys56, Cys59, Cys68, Cys71, Cys77, Cys81, His89, and Cys93 together coordinate Zn(2+). The segment at 56–93 (CDGCFKTNNLKKCSACQVVWYCGSSCQKSEWKLHRDEC) adopts an MYND-type zinc-finger fold.

This sequence belongs to the class V-like SAM-binding methyltransferase superfamily. Histone-lysine methyltransferase family. SET2 subfamily.

It localises to the nucleus. It is found in the chromosome. It catalyses the reaction L-lysyl-[histone] + S-adenosyl-L-methionine = N(6)-methyl-L-lysyl-[histone] + S-adenosyl-L-homocysteine + H(+). Functionally, histone methyltransferase. The protein is Histone-lysine N-methyltransferase ASHR1 (ASHR1) of Arabidopsis thaliana (Mouse-ear cress).